The chain runs to 606 residues: MACPF domain-containing protein At4g24290 (606 aa).

The 332-residue stretch at M1–L332 folds into the MACPF domain.

The protein belongs to the complement C6/C7/C8/C9 (TC 1.C.39) family.

In terms of biological role, negatively controls the salicylic acid (SA)-mediated pathway of programmed cell death in plant immunity. The chain is MACPF domain-containing protein At4g24290 from Arabidopsis thaliana (Mouse-ear cress).